The following is a 440-amino-acid chain: MTQTQFQVVILATDKASGNSKLEPIDATIPHSLLPIANRPLISYQLEFLEKAGFETKSEPVIIVVNETSQEKIKQYVSEIYKGKIEVEFFVLKDQLATCEILYRIRDKIRLEYFMVLNANLVLEDTFIRQMADLHRKEESSLTVLLKPPTPKVEQKGKGATETSTKQDKLFTDYIALEEKSQKIVMMEPATEVEEDLNFNKSLLKYFPNVTIYTNLQDTQLYIFSRWVLDLIIEDQKEKYPLFFDIKKHLIPYLLSCQIPNIKRKRALPASAFNQNQTLSQTMSSTTSPFDQFSELNAQKNKTIKCFAHLLKKEGYCMNVNTIKNYQQINRDIAKGDLQYLPNEPKSEKNFFIDPTANVTITQVGPQCVIGTSTTLGAKCSVKFSIIGKHCKIGDGVRIENSIIMDHVIIEDRCVINSSIICNDVYIKSGSSTVGQYLTK.

The protein belongs to the eIF-2B gamma/epsilon subunits family. In terms of assembly, component of the translation initiation factor 2B (eIF2B) complex which is a heterodecamer of two sets of five different subunits: alpha, beta, gamma, delta and epsilon. Subunits alpha, beta and delta comprise a regulatory subcomplex and subunits epsilon and gamma comprise a catalytic subcomplex. Within the complex, the hexameric regulatory complex resides at the center, with the two heterodimeric catalytic subcomplexes bound on opposite sides.

The protein resides in the cytoplasm. It localises to the cytosol. Functionally, acts as a component of the translation initiation factor 2B (eIF2B) complex, which catalyzes the exchange of GDP for GTP on the eukaryotic initiation factor 2 (eIF2) complex gamma subunit. Its guanine nucleotide exchange factor activity is repressed when bound to eIF2 complex phosphorylated on the alpha subunit, thereby limiting the amount of methionyl-initiator methionine tRNA available to the ribosome and consequently global translation is repressed. In Dictyostelium discoideum (Social amoeba), this protein is Translation initiation factor eIF2B subunit gamma (eif2b3).